Reading from the N-terminus, the 141-residue chain is Protein wingless (141 aa).

The O-palmitoleoyl serine; by PORCN moiety is linked to residue Ser-3. The segment covering 40 to 49 (TDLEAPTQRN) has biased composition (polar residues). The interval 40 to 61 (TDLEAPTQRNDAAPHRAPRRER) is disordered. The cysteines at positions 107 and 122 are disulfide-linked. 2 N-linked (GlcNAc...) asparagine glycosylation sites follow: Asn-108 and Asn-138.

It belongs to the Wnt family. Post-translationally, palmitoleoylated by porcupine. The lipid group functions as a sorting signal, targeting the ligand to polarized vesicles that transport wg to unique sites at the cell surface. Depalmitoleoylated by notum, leading to inhibit Wnt signaling pathway.

It is found in the secreted. The protein resides in the extracellular space. It localises to the extracellular matrix. Its function is as follows. Segment polarity protein. Binds to the frizzled seven-transmembrane receptors. This protein is probably a growth factor. The sequence is that of Protein wingless (WG) from Manduca sexta (Tobacco hawkmoth).